A 707-amino-acid polypeptide reads, in one-letter code: Trans-feruloyl-CoA synthase FCS1 (707 aa).

Residues His267 and 524-535 (ARAIGYPVVMKA) contribute to the ATP site. The ATP-grasp domain occupies 498–549 (KELLRPLGIAFPPSQFAANAEAAAAAARAIGYPVVMKAQAAALGHKSDAGGV).

The protein in the N-terminal section; belongs to the acetate CoA ligase alpha subunit family. In the C-terminal section; belongs to the acetate CoA ligase beta subunit family. Homodimer.

It carries out the reaction (E)-ferulate + ATP + CoA = (E)-feruloyl-CoA + ADP + phosphate. Functionally, catalyzes the formation of feruloyl-CoA, ADP and phosphate from ferulate, CoA and ATP. This chain is Trans-feruloyl-CoA synthase FCS1, found in Unknown prokaryotic organism.